The sequence spans 186 residues: Ribosome-recycling factor (186 aa).

The protein belongs to the RRF family.

The protein resides in the cytoplasm. Responsible for the release of ribosomes from messenger RNA at the termination of protein biosynthesis. May increase the efficiency of translation by recycling ribosomes from one round of translation to another. The protein is Ribosome-recycling factor of Chelativorans sp. (strain BNC1).